The primary structure comprises 287 residues: Large ribosomal subunit protein uL2 (287 aa).

A disordered region spans residues 221 to 287; the sequence is RGSVMNPCDH…SKRSRGGRDS (67 aa). Positions 271 to 287 are enriched in basic residues; it reads LRKRRKTSKRSRGGRDS.

The protein belongs to the universal ribosomal protein uL2 family. Part of the 50S ribosomal subunit. Forms a bridge to the 30S subunit in the 70S ribosome.

Its function is as follows. One of the primary rRNA binding proteins. Required for association of the 30S and 50S subunits to form the 70S ribosome, for tRNA binding and peptide bond formation. It has been suggested to have peptidyltransferase activity; this is somewhat controversial. Makes several contacts with the 16S rRNA in the 70S ribosome. This chain is Large ribosomal subunit protein uL2, found in Synechococcus sp. (strain CC9902).